Consider the following 326-residue polypeptide: tRNA-cytidine(32) 2-sulfurtransferase (326 aa).

The short motif at 63–68 (SGGKDS) is the PP-loop motif element. Residues Cys-138, Cys-141, and Cys-229 each coordinate [4Fe-4S] cluster.

The protein belongs to the TtcA family. As to quaternary structure, homodimer. It depends on Mg(2+) as a cofactor. [4Fe-4S] cluster is required as a cofactor.

The protein resides in the cytoplasm. It carries out the reaction cytidine(32) in tRNA + S-sulfanyl-L-cysteinyl-[cysteine desulfurase] + AH2 + ATP = 2-thiocytidine(32) in tRNA + L-cysteinyl-[cysteine desulfurase] + A + AMP + diphosphate + H(+). The protein operates within tRNA modification. In terms of biological role, catalyzes the ATP-dependent 2-thiolation of cytidine in position 32 of tRNA, to form 2-thiocytidine (s(2)C32). The sulfur atoms are provided by the cysteine/cysteine desulfurase (IscS) system. This chain is tRNA-cytidine(32) 2-sulfurtransferase, found in Leptothrix cholodnii (strain ATCC 51168 / LMG 8142 / SP-6) (Leptothrix discophora (strain SP-6)).